The primary structure comprises 487 residues: UDP-N-acetylmuramate--L-alanine ligase (487 aa).

124–130 (GTHGKTT) serves as a coordination point for ATP.

It belongs to the MurCDEF family.

The protein localises to the cytoplasm. The enzyme catalyses UDP-N-acetyl-alpha-D-muramate + L-alanine + ATP = UDP-N-acetyl-alpha-D-muramoyl-L-alanine + ADP + phosphate + H(+). It participates in cell wall biogenesis; peptidoglycan biosynthesis. Its function is as follows. Cell wall formation. The protein is UDP-N-acetylmuramate--L-alanine ligase of Acaryochloris marina (strain MBIC 11017).